Here is a 104-residue protein sequence, read N- to C-terminus: MVNMAPNTNFASLVAVAGCVLLGYNYYTGNIFCGVIGSLLLFGALWSLNGGKIWGIISFIISASIFCYINWDFILNLLFYSIIAFIVMSILILIFGNNRGGYYY.

2 consecutive transmembrane segments (helical) span residues 53 to 73 (IWGIISFIISASIFCYINWDF) and 74 to 94 (ILNLLFYSIIAFIVMSILILI).

It localises to the cell membrane. This is an uncharacterized protein from Methanocaldococcus jannaschii (strain ATCC 43067 / DSM 2661 / JAL-1 / JCM 10045 / NBRC 100440) (Methanococcus jannaschii).